Here is a 1091-residue protein sequence, read N- to C-terminus: MPRGKSASGGSTAAGPGPGRQTVLSRFFRSAGSLRSSASSTEPAEKVTEGDSRKRSLGNGGPTKKKARKVPEKEEENISVASHHPEAKKCLRPRIVLKSLEKLKEFCCDSALPQNRVQTEALRERLEVLPRCTDFEDITLQRAKNAVLSEDSKSQANQKDSQFGPCPEVFQKTSDCKPFNKRSKSVYTPLELQYLDMKQQHKDAVLCVECGYKYRFFGEDAEIAARELNIYCHLDHNFMTASIPTHRLFVHVRRLVAKGYKVGVVKQTETAALKAIGDNKSSVFSRKLTALYTKSTLIGEDVNPLIRLDDSVNIDEVMTDTSTNYLLCIYEEKENIKDKKKGNLSVGVVGVQPATGEVVFDCFQDSASRLELETRISSLQPVELLLPSDLSEPTEMLIQRATNVSVRDDRIRVERMNNTYFEYSHAFQTVTEFYAREIVDSQGSQSLSGVINLEKPVICALAAVIRYLKEFNLEKMLSKPESFKQLSSGMEFMRINGTTLRNLEMVQNQTDMKTKGSLLWVLDHTKTSFGRRKLKNWVTQPLLKLREINARLDAVSDVLHSESSVFEQIENLLRKLPDVERGLCSIYHKKCSTQEFFLIVKSLCQLKSELQALMPAVNSHVQSDLLRALIVELLSPVEHYLKVLNGPAAKVGDKTELFKDLSDFPLIKKRKNEIQEVIHSIQMRLQEFRKILKLPSLQYVTVSGQEFMIEIKNSAVSCIPADWVKVGSTKAVSRFHPPFIVESYRRLNQLREQLVLDCNAEWLGFLENFGEHYHTLCKAVDHLATVDCIFSLAKVAKQGNYCRPTLQEEKKIIIKNGRHPMIDVLLGEQDQFVPNSTSLSDSERVMIITGPNMGGKSSYIKQVTLVTIMAQIGSYVPAEEATIGIVDGIFTRMGAADNIYKGRSTFMEQLTDTAEIIRRASPQSLVILDELGRGTSTHDGIAIAYATLEYFIRDVKSLTLFVTHYPPVCELEKCYPEQVGNYHMGFLVNEDESKQDSGDMEQMPDSVTFLYQITRGIAARSYGLNVAKLADVPREVLQKAAHKSKELEGLVSLRRKRLECFTDLWMTHSVKDLHTWADKLEMEEIQTSLPH.

Composition is skewed to low complexity over residues 1-15 (MPRG…TAAG) and 24-40 (LSRF…SASS). Residues 1–84 (MPRGKSASGG…EENISVASHH (84 aa)) are disordered. Serine 33 is modified (phosphoserine). The segment covering 43–54 (PAEKVTEGDSRK) has biased composition (basic and acidic residues). ATP is bound at residue 850 to 857 (GPNMGGKS).

This sequence belongs to the DNA mismatch repair MutS family. MSH3 subfamily. Component of the DNA mismatch repair (MMR) complex composed at least of MSH2, MSH3, MSH6, PMS1 and MLH1. Heterodimer consisting of MSH2-MSH3 (MutS beta). Forms a ternary complex with MutL alpha (MLH1-PMS1). Interacts with EXO1. Interacts with MCM9.

Functionally, component of the post-replicative DNA mismatch repair system (MMR). Heterodimerizes with MSH2 to form MutS beta which binds to DNA mismatches thereby initiating DNA repair. When bound, the MutS beta heterodimer bends the DNA helix and shields approximately 20 base pairs. MutS beta recognizes large insertion-deletion loops (IDL) up to 13 nucleotides long. After mismatch binding, forms a ternary complex with the MutL alpha heterodimer, which is thought to be responsible for directing the downstream MMR events, including strand discrimination, excision, and resynthesis. This chain is DNA mismatch repair protein Msh3 (Msh3), found in Mus musculus (Mouse).